Consider the following 89-residue polypeptide: Small ribosomal subunit protein uS15 (89 aa).

This sequence belongs to the universal ribosomal protein uS15 family. As to quaternary structure, part of the 30S ribosomal subunit. Forms a bridge to the 50S subunit in the 70S ribosome, contacting the 23S rRNA.

Its function is as follows. One of the primary rRNA binding proteins, it binds directly to 16S rRNA where it helps nucleate assembly of the platform of the 30S subunit by binding and bridging several RNA helices of the 16S rRNA. Functionally, forms an intersubunit bridge (bridge B4) with the 23S rRNA of the 50S subunit in the ribosome. The polypeptide is Small ribosomal subunit protein uS15 (Shouchella clausii (strain KSM-K16) (Alkalihalobacillus clausii)).